We begin with the raw amino-acid sequence, 267 residues long: Lectin SfL-1 (267 aa).

4 tandem repeats follow at residues 1-67 (GRYT…RRGD), 68-135 (SNNY…QSGG), 136-202 (DSYN…STGG), and 203-267 (SNYK…GTAI). The interval 1 to 267 (GRYTVQNQWG…GPIGFKGTAI (267 aa)) is 4 X approximate tandem repeats.

As to quaternary structure, monomer.

Functionally, lectin specific for high mannose N-glycans, recognizes the branched moiety of these glycans. Does not recognize other types of N-glycans or monosaccharides. In Solieria filiformis (Red alga), this protein is Lectin SfL-1.